A 394-amino-acid chain; its full sequence is Upstream-binding factor 1-like protein 1 (394 aa).

The HMG box 1 DNA-binding region spans 101-169; sequence PKRPLTAYLR…DFQKKMRQFK (69 aa). Over residues 167–180 the composition is skewed to basic residues; sequence QFKKRHPVSGHPKK. The tract at residues 167–197 is disordered; it reads QFKKRHPVSGHPKKSVVPQSHPTKVPTKSQG. Polar residues predominate over residues 183-197; the sequence is VPQSHPTKVPTKSQG. A DNA-binding region (HMG box 2) is located at residues 225-291; it reads RKPPMNAYHK…QYRVKLDLWL (67 aa). Residues 305–394 are disordered; that stretch reads AKATCGKRKN…SDSSSTDEDD (90 aa).

It localises to the cytoplasm. The protein localises to the nucleus. Functionally, essential for proliferation of the inner cell mass and trophectodermal cells in peri-implantation development. This chain is Upstream-binding factor 1-like protein 1, found in Mus musculus (Mouse).